Reading from the N-terminus, the 59-residue chain is Eag protein (59 aa).

This chain is Eag protein (eag), found in Salmonella phage P22 (Bacteriophage P22).